We begin with the raw amino-acid sequence, 209 residues long: Nucleoside triphosphate pyrophosphatase (209 aa).

The Proton acceptor role is filled by aspartate 79.

It belongs to the Maf family. It depends on a divalent metal cation as a cofactor.

The protein localises to the cytoplasm. It carries out the reaction a ribonucleoside 5'-triphosphate + H2O = a ribonucleoside 5'-phosphate + diphosphate + H(+). The catalysed reaction is a 2'-deoxyribonucleoside 5'-triphosphate + H2O = a 2'-deoxyribonucleoside 5'-phosphate + diphosphate + H(+). Its function is as follows. Nucleoside triphosphate pyrophosphatase. May have a dual role in cell division arrest and in preventing the incorporation of modified nucleotides into cellular nucleic acids. The sequence is that of Nucleoside triphosphate pyrophosphatase from Mycolicibacterium vanbaalenii (strain DSM 7251 / JCM 13017 / BCRC 16820 / KCTC 9966 / NRRL B-24157 / PYR-1) (Mycobacterium vanbaalenii).